The following is a 342-amino-acid chain: Anthranilate phosphoribosyltransferase (342 aa).

Residues Gly-80, 83–84, Thr-88, 90–93, 108–116, and Ser-120 contribute to the 5-phospho-alpha-D-ribose 1-diphosphate site; these read GD, NIST, and KHGNRAVSS. An anthranilate-binding site is contributed by Gly-80. Ser-92 contacts Mg(2+). Asn-111 contacts anthranilate. Arg-166 contributes to the anthranilate binding site. Mg(2+)-binding residues include Asp-225 and Glu-226.

It belongs to the anthranilate phosphoribosyltransferase family. In terms of assembly, homodimer. The cofactor is Mg(2+).

It catalyses the reaction N-(5-phospho-beta-D-ribosyl)anthranilate + diphosphate = 5-phospho-alpha-D-ribose 1-diphosphate + anthranilate. It participates in amino-acid biosynthesis; L-tryptophan biosynthesis; L-tryptophan from chorismate: step 2/5. Functionally, catalyzes the transfer of the phosphoribosyl group of 5-phosphorylribose-1-pyrophosphate (PRPP) to anthranilate to yield N-(5'-phosphoribosyl)-anthranilate (PRA). This is Anthranilate phosphoribosyltransferase from Halalkalibacterium halodurans (strain ATCC BAA-125 / DSM 18197 / FERM 7344 / JCM 9153 / C-125) (Bacillus halodurans).